The sequence spans 344 residues: Phosphate acyltransferase (344 aa).

It belongs to the PlsX family. In terms of assembly, homodimer. Probably interacts with PlsY.

Its subcellular location is the cytoplasm. It catalyses the reaction a fatty acyl-[ACP] + phosphate = an acyl phosphate + holo-[ACP]. Its pathway is lipid metabolism; phospholipid metabolism. In terms of biological role, catalyzes the reversible formation of acyl-phosphate (acyl-PO(4)) from acyl-[acyl-carrier-protein] (acyl-ACP). This enzyme utilizes acyl-ACP as fatty acyl donor, but not acyl-CoA. The sequence is that of Phosphate acyltransferase from Cyanothece sp. (strain PCC 7425 / ATCC 29141).